A 362-amino-acid chain; its full sequence is DNA polymerase IV (362 aa).

The UmuC domain maps to 6-187; it reads IIHVDMDAFY…LPVSSFHGVG (182 aa). Mg(2+) is bound by residues Asp-10 and Asp-105. The active site involves Glu-106.

Belongs to the DNA polymerase type-Y family. Monomer. Requires Mg(2+) as cofactor.

The protein localises to the cytoplasm. The enzyme catalyses DNA(n) + a 2'-deoxyribonucleoside 5'-triphosphate = DNA(n+1) + diphosphate. In terms of biological role, poorly processive, error-prone DNA polymerase involved in untargeted mutagenesis. Copies undamaged DNA at stalled replication forks, which arise in vivo from mismatched or misaligned primer ends. These misaligned primers can be extended by PolIV. Exhibits no 3'-5' exonuclease (proofreading) activity. May be involved in translesional synthesis, in conjunction with the beta clamp from PolIII. This is DNA polymerase IV from Leptospira interrogans serogroup Icterohaemorrhagiae serovar copenhageni (strain Fiocruz L1-130).